A 206-amino-acid polypeptide reads, in one-letter code: Large ribosomal subunit protein uL22m (206 aa).

The transit peptide at M1 to D40 directs the protein to the mitochondrion.

Belongs to the universal ribosomal protein uL22 family. As to quaternary structure, component of the mitochondrial ribosome large subunit (39S) which comprises a 16S rRNA and about 50 distinct proteins.

It localises to the mitochondrion. This is Large ribosomal subunit protein uL22m (Mrpl22) from Rattus norvegicus (Rat).